Reading from the N-terminus, the 161-residue chain is Pupal cuticle protein C1B (161 aa).

9 tandem repeats follow at residues 6–9, 14–17, 35–38, 87–90, 103–106, 112–115, 121–124, 130–133, and 143–146.

Functionally, component of the cuticle of the pupa of Tenebrio molitor. The sequence is that of Pupal cuticle protein C1B from Tenebrio molitor (Yellow mealworm beetle).